Here is a 344-residue protein sequence, read N- to C-terminus: Follistatin (344 aa).

Residues 1-29 (MVCARHQPGGLCLLLLLLCQFMEDRSAQA) form the signal peptide. The TB domain maps to 30–103 (GNCWLRQAKN…TCENVDCGPG (74 aa)). Cystine bridges form between Cys-32–Cys-55, Cys-42–Cys-88, Cys-56–Cys-91, Cys-95–Cys-106, Cys-100–Cys-116, Cys-118–Cys-150, Cys-122–Cys-143, Cys-132–Cys-164, Cys-168–Cys-179, Cys-173–Cys-189, Cys-192–Cys-225, Cys-196–Cys-218, Cys-207–Cys-239, Cys-245–Cys-256, Cys-250–Cys-267, Cys-270–Cys-302, Cys-274–Cys-295, and Cys-284–Cys-316. The region spanning 94 to 117 (TCENVDCGPGKKCRMNKKNKPRCV) is the Follistatin-like 1 domain. A Kazal-like 1 domain is found at 112–166 (NKPRCVCAPDCSNITWKGPVCGLDGKTYRNECALLKARCKEQPELEVQYQGKCKK). A glycan (N-linked (GlcNAc...) asparagine) is linked at Asn-124. Residues 167 to 190 (TCRDVFCPGSSTCVVDQTNNAYCV) enclose the Follistatin-like 2 domain. Residues 186 to 241 (NAYCVTCNRICPEPSSSEQSLCGNDGVTYSSACHLRKATCLLGRSIGLAYEGKCIK) form the Kazal-like 2 domain. In terms of domain architecture, Follistatin-like 3 spans 244-268 (SCEDIQCGGGKKCLWDFKVGRGRCS). The 55-residue stretch at 264-318 (RGRCSLCDELCPDSKSDEPVCASDNATYASECAMKEAACSSGVLLEVKHSGSCNS) folds into the Kazal-like 3 domain. Asn-288 is a glycosylation site (N-linked (GlcNAc...) asparagine). Residues 315–344 (SCNSISEETEEEEEEEDQDYSFPISSTLEW) are disordered. The segment covering 321-333 (EETEEEEEEEDQD) has biased composition (acidic residues).

In terms of assembly, interacts with GDF11. Interacts with activin A/INHBA. Interacts with myostatin/MSTN.

Its subcellular location is the secreted. The protein localises to the nucleus. The protein resides in the nucleolus. Its function is as follows. Multifunctional regulatory protein whose primary function is to antagonize members of the transforming growth factor beta (TGF-beta) superfamily including activin, myostatin, GDF11 or bone morphogenetic proteins (BMPs). Mechanistically, binds to these ligands in the extracellular space, blocking their type II receptor-binding site to inhibit downstream signaling. Plays an essential role in muscle fiber formation and growth both by preventing the repressive effects of myostatin and through SMAD3/AKT/mTOR signaling independently of myostatin. Also promotes neural differentiation by antagonizing the action BMP4. Acts as a specific inhibitor of the biosynthesis and secretion of pituitary follicle stimulating hormone (FSH) by sequestering activin A/INHBA. On the other hand, translocates into the nucleus where it down-regulates rRNA synthesis and ribosome biogenesis to maintain cellular energy homeostasis by binding to rDNA. This Rattus norvegicus (Rat) protein is Follistatin.